The following is a 455-amino-acid chain: Single-stranded DNA-binding protein homolog sam-10 (455 aa).

One can recognise a LisH domain in the interval 19–51 (ARDRLTSYIYEYLQQTGASKTAETFKEEVLSTN). Disordered regions lie at residues 217–249 (PPPGGGAQPFPGASGSGGMMPNGAHPHMSLNSP), 281–302 (SDHQPMSAGPAAAAPGATTAGG), 314–343 (GPGSVPQVATTSVGSVGTPSSIGQQLHQPK), and 357–442 (EALT…NGEI). Low complexity-rich tracts occupy residues 288-298 (AGPAAAAPGAT) and 321-336 (VATTSVGSVGTPSSIG). Residues 396 to 406 (HSVNNNVNPGT) are compositionally biased toward polar residues. The span at 407-421 (PGSNPLSNPMSNPPL) shows a compositional bias: low complexity.

In terms of tissue distribution, ubiquitously expressed with higher expression in the head and tail ganglia, the vulva and PLM neurons.

The protein resides in the cytoplasm. It localises to the nucleus. Its function is as follows. Involved cell autonomously in PLM neuron pre-synaptic differentiation by negatively regulating prk-2 expression and in neurite branch positioning. This Caenorhabditis elegans protein is Single-stranded DNA-binding protein homolog sam-10.